A 491-amino-acid chain; its full sequence is Protein nucleotidyltransferase YdiU (491 aa).

Gly-94, Gly-96, Arg-97, Lys-117, Asp-129, Gly-130, Arg-180, and Arg-187 together coordinate ATP. The Proton acceptor role is filled by Asp-256. Residues Asn-257 and Asp-266 each contribute to the Mg(2+) site. Asp-266 lines the ATP pocket.

Belongs to the SELO family. The cofactor is Mg(2+). It depends on Mn(2+) as a cofactor.

The enzyme catalyses L-seryl-[protein] + ATP = 3-O-(5'-adenylyl)-L-seryl-[protein] + diphosphate. It catalyses the reaction L-threonyl-[protein] + ATP = 3-O-(5'-adenylyl)-L-threonyl-[protein] + diphosphate. It carries out the reaction L-tyrosyl-[protein] + ATP = O-(5'-adenylyl)-L-tyrosyl-[protein] + diphosphate. The catalysed reaction is L-histidyl-[protein] + UTP = N(tele)-(5'-uridylyl)-L-histidyl-[protein] + diphosphate. The enzyme catalyses L-seryl-[protein] + UTP = O-(5'-uridylyl)-L-seryl-[protein] + diphosphate. It catalyses the reaction L-tyrosyl-[protein] + UTP = O-(5'-uridylyl)-L-tyrosyl-[protein] + diphosphate. Its function is as follows. Nucleotidyltransferase involved in the post-translational modification of proteins. It can catalyze the addition of adenosine monophosphate (AMP) or uridine monophosphate (UMP) to a protein, resulting in modifications known as AMPylation and UMPylation. The polypeptide is Protein nucleotidyltransferase YdiU (Brevibacillus brevis (strain 47 / JCM 6285 / NBRC 100599)).